Here is a 399-residue protein sequence, read N- to C-terminus: Acetate kinase (399 aa).

Asn10 provides a ligand contact to Mg(2+). Position 17 (Lys17) interacts with ATP. Arg91 provides a ligand contact to substrate. The active-site Proton donor/acceptor is Asp150. Residues 210–214 (HLGNG), 285–287 (DFR), and 333–337 (GIGEN) contribute to the ATP site. Mg(2+) is bound at residue Glu387.

Belongs to the acetokinase family. In terms of assembly, homodimer. Requires Mg(2+) as cofactor. It depends on Mn(2+) as a cofactor.

The protein resides in the cytoplasm. The catalysed reaction is acetate + ATP = acetyl phosphate + ADP. It participates in metabolic intermediate biosynthesis; acetyl-CoA biosynthesis; acetyl-CoA from acetate: step 1/2. Functionally, catalyzes the formation of acetyl phosphate from acetate and ATP. Can also catalyze the reverse reaction. The polypeptide is Acetate kinase (Wigglesworthia glossinidia brevipalpis).